A 327-amino-acid polypeptide reads, in one-letter code: Inactive peptidyl-prolyl cis-trans isomerase FKBP6 (327 aa).

In terms of domain architecture, PPIase FKBP-type spans 54 to 143 (DASVLVKYSG…LFEIELLDFL (90 aa)). TPR repeat units follow at residues 171 to 204 (AATE…LRRR), 219 to 252 (LPVL…DQKN), and 253 to 286 (AKAL…QPFN).

This sequence belongs to the FKBP6 family. As to quaternary structure, interacts (via TPR repeats) with HSP90. Interacts with HSP72/HSPA2 and CLTC. Interacts with GAPDH; leading to inhibit GAPDH catalytic activity. In terms of tissue distribution, detected in all tissues examined, with higher expression in testis, heart, skeletal muscle, liver, and kidney.

The protein resides in the cytoplasm. It is found in the nucleus. Functionally, has an essential role in spermatogenesis. It is required to repress transposable elements and prevent their mobilization, which is essential for the germline integrity. Acts via the piRNA metabolic process, which mediates the repression of transposable elements during meiosis by forming complexes composed of piRNAs and Piwi proteins and govern the methylation and subsequent repression of transposons. Acts as a co-chaperone via its interaction with HSP90 and is required for the piRNA amplification process, the secondary piRNA biogenesis. May be required together with HSP90 in removal of 16 nucleotide ping-pong by-products from Piwi complexes, possibly facilitating turnover of Piwi complexes. The polypeptide is Inactive peptidyl-prolyl cis-trans isomerase FKBP6 (FKBP6) (Homo sapiens (Human)).